Reading from the N-terminus, the 245-residue chain is Acetylglutamate kinase (245 aa).

Substrate-binding positions include 41–42 (GG), Arg-63, and Asn-156.

The protein belongs to the acetylglutamate kinase family. ArgB subfamily.

The protein resides in the cytoplasm. The enzyme catalyses N-acetyl-L-glutamate + ATP = N-acetyl-L-glutamyl 5-phosphate + ADP. It functions in the pathway amino-acid biosynthesis; L-arginine biosynthesis; N(2)-acetyl-L-ornithine from L-glutamate: step 2/4. Catalyzes the ATP-dependent phosphorylation of N-acetyl-L-glutamate. This Leuconostoc citreum (strain KM20) protein is Acetylglutamate kinase.